We begin with the raw amino-acid sequence, 245 residues long: Ribosomal RNA large subunit methyltransferase E (245 aa).

Positions 83, 85, 111, 127, and 156 each coordinate S-adenosyl-L-methionine. Lys196 acts as the Proton acceptor in catalysis.

The protein belongs to the class I-like SAM-binding methyltransferase superfamily. RNA methyltransferase RlmE family.

The protein localises to the cytoplasm. It carries out the reaction uridine(2552) in 23S rRNA + S-adenosyl-L-methionine = 2'-O-methyluridine(2552) in 23S rRNA + S-adenosyl-L-homocysteine + H(+). Specifically methylates the uridine in position 2552 of 23S rRNA at the 2'-O position of the ribose in the fully assembled 50S ribosomal subunit. The chain is Ribosomal RNA large subunit methyltransferase E from Polaromonas naphthalenivorans (strain CJ2).